A 477-amino-acid polypeptide reads, in one-letter code: Ribulose bisphosphate carboxylase large chain (477 aa).

Positions 1–2 (MS) are excised as a propeptide. Proline 3 bears the N-acetylproline mark. Residue lysine 14 is modified to N6,N6,N6-trimethyllysine. The substrate site is built by asparagine 123 and threonine 173. The Proton acceptor role is filled by lysine 175. Lysine 177 lines the substrate pocket. 3 residues coordinate Mg(2+): lysine 201, aspartate 203, and glutamate 204. The residue at position 201 (lysine 201) is an N6-carboxylysine. Histidine 294 (proton acceptor) is an active-site residue. 3 residues coordinate substrate: arginine 295, histidine 327, and serine 379.

This sequence belongs to the RuBisCO large chain family. Type I subfamily. In terms of assembly, heterohexadecamer of 8 large chains and 8 small chains; disulfide-linked. The disulfide link is formed within the large subunit homodimers. Mg(2+) serves as cofactor. Post-translationally, the disulfide bond which can form in the large chain dimeric partners within the hexadecamer appears to be associated with oxidative stress and protein turnover.

The protein localises to the plastid. It is found in the chloroplast. The enzyme catalyses 2 (2R)-3-phosphoglycerate + 2 H(+) = D-ribulose 1,5-bisphosphate + CO2 + H2O. It catalyses the reaction D-ribulose 1,5-bisphosphate + O2 = 2-phosphoglycolate + (2R)-3-phosphoglycerate + 2 H(+). Its function is as follows. RuBisCO catalyzes two reactions: the carboxylation of D-ribulose 1,5-bisphosphate, the primary event in carbon dioxide fixation, as well as the oxidative fragmentation of the pentose substrate in the photorespiration process. Both reactions occur simultaneously and in competition at the same active site. This is Ribulose bisphosphate carboxylase large chain from Nicotiana sylvestris (Wood tobacco).